A 191-amino-acid polypeptide reads, in one-letter code: Cell division protein SepF (191 aa).

Polar residues predominate over residues 157-178; that stretch reads YLNESPAQPVQTTTSFGRTATP. The segment at 157-191 is disordered; the sequence is YLNESPAQPVQTTTSFGRTATPTPAWGTDSRYAAQ.

It belongs to the SepF family. As to quaternary structure, homodimer. Interacts with FtsZ.

The protein localises to the cytoplasm. Cell division protein that is part of the divisome complex and is recruited early to the Z-ring. Probably stimulates Z-ring formation, perhaps through the cross-linking of FtsZ protofilaments. Its function overlaps with FtsA. The polypeptide is Cell division protein SepF (Synechococcus elongatus (strain ATCC 33912 / PCC 7942 / FACHB-805) (Anacystis nidulans R2)).